Reading from the N-terminus, the 239-residue chain is Small ribosomal subunit protein uS2c (239 aa).

The protein belongs to the universal ribosomal protein uS2 family.

It localises to the plastid. It is found in the organellar chromatophore. This Paulinella chromatophora protein is Small ribosomal subunit protein uS2c (rps2).